The following is a 189-amino-acid chain: GTPase KRas (189 aa).

Met-1 carries the N-acetylmethionine; in GTPase KRas; alternate modification. Thr-2 is modified (N-acetylthreonine; in GTPase KRas, N-terminally processed). Residues 10–18 (GAGGVGKSA), 29–35 (VDEYDPT), and 59–60 (AG) each bind GTP. Positions 32–40 (YDPTIEDSY) match the Effector region motif. A glycan ((Microbial infection) O-linked (Glc) threonine; by P.sordellii toxin TcsL) is linked at Thr-35. Lys-104 bears the N6-acetyllysine mark. 116–119 (NKCD) is a GTP binding site. The tract at residues 166 to 185 (YRLKKISKEEKTPGCVKIKK) is hypervariable region. Lys-170 is covalently cross-linked (Glycyl lysine isopeptide (Lys-Gly) (interchain with G-Cter in ubiquitin)). Residue Cys-180 is the site of S-palmitoyl cysteine attachment. Residues Lys-182, Lys-184, and Lys-185 are each lipidated (N6-palmitoyl lysine). Cys-186 is modified (cysteine methyl ester). Residue Cys-186 is the site of S-farnesyl cysteine attachment. Positions 187–189 (IIM) are cleaved as a propeptide — removed in mature form.

It belongs to the small GTPase superfamily. Ras family. As to quaternary structure, interacts with PHLPP. Interacts (active GTP-bound form preferentially) with RGS14. Interacts (when farnesylated) with PDE6D; this promotes dissociation from the cell membrane. Interacts with SOS1. Interacts (when farnesylated) with GPR31. Interacts with RAP1GDS1. Interacts (active GTP-bound form) with both SHOC2 and PP1c (all isoforms) to form a tertiary complex; SHOC2 and PP1c preferably bind M-Ras/MRAS, but they also bind K-Ras/KRAS, N-Ras/NRAS and H-Ras/HRAS. Interacts (GTP-bound form) with MAPKAP1/SIN1; inhibiting K-Ras/KRAS activity. Interacts with GPR31; in a farnelysation-dependent manner. In terms of processing, acetylation at Lys-104 prevents interaction with guanine nucleotide exchange factors (GEFs). Palmitoylated at Lys-182, Lys-184 and Lys-185. Palmitoylation on lysine residues is promoted by palmitoylation at Cys-180. Lysine-depalmitoylation by SIRT2 promotes its localization to endomembranes in endocytic pathways. Post-translationally, ubiquitinated by the BCR(LZTR1) E3 ubiquitin ligase complex at Lys-170 in a non-degradative manner, leading to inhibit Ras signaling by decreasing Ras association with membranes. In terms of processing, (Microbial infection) Glucosylated at Thr-35 by P.sordellii toxin TcsL.

Its subcellular location is the cell membrane. It localises to the endomembrane system. The protein localises to the cytoplasm. It is found in the cytosol. The enzyme catalyses GTP + H2O = GDP + phosphate + H(+). Alternates between an inactive form bound to GDP and an active form bound to GTP. Activated by a guanine nucleotide-exchange factor (GEF) and inactivated by a GTPase-activating protein (GAP). Interaction with SOS1 promotes exchange of bound GDP to GTP. In terms of biological role, ras proteins bind GDP/GTP and possess intrinsic GTPase activity. Plays an important role in the regulation of cell proliferation. Plays a role in promoting oncogenic events by inducing transcriptional silencing of tumor suppressor genes (TSGs) in colorectal cancer (CRC) cells in a ZNF304-dependent manner. This is GTPase KRas (KRAS) from Homo sapiens (Human).